The primary structure comprises 361 residues: Spermidine/putrescine import ATP-binding protein PotA (361 aa).

The ABC transporter domain maps to 4-234 (LEIKNVVKRF…PKNRFVADFL (231 aa)). 36–43 (GPSGCGKT) contacts ATP.

Belongs to the ABC transporter superfamily. Spermidine/putrescine importer (TC 3.A.1.11.1) family. In terms of assembly, the complex is composed of two ATP-binding proteins (PotA), two transmembrane proteins (PotB and PotC) and a solute-binding protein (PotD).

The protein localises to the cell inner membrane. The catalysed reaction is ATP + H2O + polyamine-[polyamine-binding protein]Side 1 = ADP + phosphate + polyamineSide 2 + [polyamine-binding protein]Side 1.. Part of the ABC transporter complex PotABCD involved in spermidine/putrescine import. Responsible for energy coupling to the transport system. The polypeptide is Spermidine/putrescine import ATP-binding protein PotA (Chromobacterium violaceum (strain ATCC 12472 / DSM 30191 / JCM 1249 / CCUG 213 / NBRC 12614 / NCIMB 9131 / NCTC 9757 / MK)).